The sequence spans 891 residues: Metabotropic glutamate receptor-like protein N (891 aa).

Residues 1–399 lie on the Extracellular side of the membrane; the sequence is MKLYTHKINR…FKPISKTIEY (399 aa). Asn52, Asn85, Asn88, Asn125, Asn132, Asn224, Asn298, Asn312, Asn320, Asn325, Asn353, Asn363, and Asn375 each carry an N-linked (GlcNAc...) asparagine glycan. Residues 52–91 form a disordered region; it reads NNSNSNSNNNNNNNNNNNNNNNNNNNNNNNNNNNNSNNSN. Residues 400–420 form a helical membrane-spanning segment; that stretch reads GITIVSSILIGALIIIQICII. At 421 to 433 the chain is on the cytoplasmic side; the sequence is KYKNKPSFKSASP. Residues 434 to 454 traverse the membrane as a helical segment; the sequence is TFLIFIVIGGIFVYIGVIIWV. Topologically, residues 455-461 are extracellular; that stretch reads SGVNVFT. Residues 462-482 traverse the membrane as a helical segment; it reads CNAKFWLISLGLTTMIGGIVV. Over 483–505 the chain is Cytoplasmic; the sequence is KNFRIWLIFDNPKLYHIKITNLQ. The chain crosses the membrane as a helical span at residues 506 to 526; it reads LLPWVLGMFLLNVFLLSLITG. Topologically, residues 527–555 are extracellular; sequence LGKLTPFKVFPNDEKFSSYEIQCEMMDGG. A helical membrane pass occupies residues 556–576; the sequence is LIALYFLLGYFAIIVMIGIFV. Residues 577 to 592 are Cytoplasmic-facing; the sequence is SWKIRIVDIEEFNESK. Residues 593 to 613 form a helical membrane-spanning segment; the sequence is SVAYSLYSIVFCLLIIAPLTI. At 614-625 the chain is on the extracellular side; the sequence is SKTGHNTEILCS. The helical transmembrane segment at 626 to 646 threads the bilayer; sequence GFIFIVAAIITIMFIPKFWAL. Topologically, residues 647–891 are cytoplasmic; it reads KIYGAEGSNE…SDSNSDSIIQ (245 aa). Disordered stretches follow at residues 660 to 689, 742 to 827, and 869 to 891; these read QSSS…KKSS, NEMT…ILTP, and DEVI…SIIQ. The segment covering 742 to 767 has biased composition (polar residues); it reads NEMTYNDDPTYTEPSEQPTYTESSEQ. Positions 772 to 782 are enriched in low complexity; it reads PRTLTATPRTN. Residues 783–820 are compositionally biased toward polar residues; that stretch reads DLTTPRTNDLTTPRTNDLITPRTNDLSTPRTNDLNTPR. Residues 872–881 show a composition bias toward acidic residues; that stretch reads IENSDSESES. The segment covering 882-891 has biased composition (low complexity); sequence SDSNSDSIIQ.

It belongs to the G-protein coupled receptor 3 family. GABA-B receptor subfamily.

The protein resides in the membrane. The sequence is that of Metabotropic glutamate receptor-like protein N (grlN) from Dictyostelium discoideum (Social amoeba).